The chain runs to 372 residues: UDP-N-acetylglucosamine--N-acetylmuramyl-(pentapeptide) pyrophosphoryl-undecaprenol N-acetylglucosamine transferase (372 aa).

Residues 21-23 (TAG), Asn135, Arg172, Ser206, and Gln303 contribute to the UDP-N-acetyl-alpha-D-glucosamine site.

Belongs to the glycosyltransferase 28 family. MurG subfamily.

The protein resides in the cell membrane. It catalyses the reaction di-trans,octa-cis-undecaprenyl diphospho-N-acetyl-alpha-D-muramoyl-L-alanyl-D-glutamyl-meso-2,6-diaminopimeloyl-D-alanyl-D-alanine + UDP-N-acetyl-alpha-D-glucosamine = di-trans,octa-cis-undecaprenyl diphospho-[N-acetyl-alpha-D-glucosaminyl-(1-&gt;4)]-N-acetyl-alpha-D-muramoyl-L-alanyl-D-glutamyl-meso-2,6-diaminopimeloyl-D-alanyl-D-alanine + UDP + H(+). The protein operates within cell wall biogenesis; peptidoglycan biosynthesis. Functionally, cell wall formation. Catalyzes the transfer of a GlcNAc subunit on undecaprenyl-pyrophosphoryl-MurNAc-pentapeptide (lipid intermediate I) to form undecaprenyl-pyrophosphoryl-MurNAc-(pentapeptide)GlcNAc (lipid intermediate II). The polypeptide is UDP-N-acetylglucosamine--N-acetylmuramyl-(pentapeptide) pyrophosphoryl-undecaprenol N-acetylglucosamine transferase (Paenarthrobacter aurescens (strain TC1)).